We begin with the raw amino-acid sequence, 112 residues long: Nitrogenase-stabilizing/protective protein NifW (112 aa).

The protein belongs to the NifW family. In terms of assembly, homotrimer; associates with NifD.

Its function is as follows. May protect the nitrogenase Fe-Mo protein from oxidative damage. The protein is Nitrogenase-stabilizing/protective protein NifW of Paraburkholderia xenovorans (strain LB400).